A 556-amino-acid polypeptide reads, in one-letter code: MRSDVITKGSKSAPQRSLLSALGLTKEEMERPLVGIVSSQNDIVPGHMNLDKIVEAVKMGVSMAGGTPIVFPAIAVCDGIAMGHEGMKYSLVTRDLIADSTEAMAMAHAFDALVMVPNCDKNVPGLLMAAARVNIPTIFVSGGPMLAGKVDGCKTSLSSMFEAVGAYNAGKITAEKLDEYENNVCPTCGSCSGMYTANSMNCLTEVLGMGLQGNGTIPAVYSERIKLAKHAGMKIMELLEKNIRPRDIMTEDAFMNAMTMDMALGCSTNSMLHLPAIAHEVGFDLNVDIANEISSKTPNLCHLAPAGHTYIEDLNDAGGIYAVMNEINKLGLLKTNLITCTGKTVGENIEGCINKNPEVIRPVKNPYSQTGGIAVLKGNLAPDSCVVKRSAVVPKMLKHEGPAKVFDCEEDALEAINTGKIVAGDVVVIRYEGPKGGPGMREMLNPTSAIAGRGLGSSVALITDGRFSGASRGASIGHVSPEAAVGGNIALVEDGDMIQIDINANTINFLVSDEELARRKANWKPRKPKITTGYLARYAALVTSGNRGAILDIPKF.

Asp78 serves as a coordination point for Mg(2+). [2Fe-2S] cluster is bound at residue Cys119. Residues Asp120 and Lys121 each contribute to the Mg(2+) site. Lys121 carries the N6-carboxylysine modification. Residue Cys191 coordinates [2Fe-2S] cluster. A Mg(2+)-binding site is contributed by Glu442. Residue Ser468 is the Proton acceptor of the active site.

The protein belongs to the IlvD/Edd family. As to quaternary structure, homodimer. [2Fe-2S] cluster is required as a cofactor. The cofactor is Mg(2+).

It carries out the reaction (2R)-2,3-dihydroxy-3-methylbutanoate = 3-methyl-2-oxobutanoate + H2O. The enzyme catalyses (2R,3R)-2,3-dihydroxy-3-methylpentanoate = (S)-3-methyl-2-oxopentanoate + H2O. The protein operates within amino-acid biosynthesis; L-isoleucine biosynthesis; L-isoleucine from 2-oxobutanoate: step 3/4. It participates in amino-acid biosynthesis; L-valine biosynthesis; L-valine from pyruvate: step 3/4. Its function is as follows. Functions in the biosynthesis of branched-chain amino acids. Catalyzes the dehydration of (2R,3R)-2,3-dihydroxy-3-methylpentanoate (2,3-dihydroxy-3-methylvalerate) into 2-oxo-3-methylpentanoate (2-oxo-3-methylvalerate) and of (2R)-2,3-dihydroxy-3-methylbutanoate (2,3-dihydroxyisovalerate) into 2-oxo-3-methylbutanoate (2-oxoisovalerate), the penultimate precursor to L-isoleucine and L-valine, respectively. This chain is Dihydroxy-acid dehydratase, found in Clostridium beijerinckii (strain ATCC 51743 / NCIMB 8052) (Clostridium acetobutylicum).